Reading from the N-terminus, the 188-residue chain is Elongation factor P (188 aa).

The residue at position 34 (K34) is an N6-(3,6-diaminohexanoyl)-5-hydroxylysine.

It belongs to the elongation factor P family. May be beta-lysylated on the epsilon-amino group of Lys-34 by the combined action of EpmA and EpmB, and then hydroxylated on the C5 position of the same residue by EpmC (if this protein is present). Lysylation is critical for the stimulatory effect of EF-P on peptide-bond formation. The lysylation moiety may extend toward the peptidyltransferase center and stabilize the terminal 3-CCA end of the tRNA. Hydroxylation of the C5 position on Lys-34 may allow additional potential stabilizing hydrogen-bond interactions with the P-tRNA.

The protein resides in the cytoplasm. It participates in protein biosynthesis; polypeptide chain elongation. Its function is as follows. Involved in peptide bond synthesis. Alleviates ribosome stalling that occurs when 3 or more consecutive Pro residues or the sequence PPG is present in a protein, possibly by augmenting the peptidyl transferase activity of the ribosome. Modification of Lys-34 is required for alleviation. This chain is Elongation factor P, found in Coxiella burnetii (strain CbuG_Q212) (Coxiella burnetii (strain Q212)).